The chain runs to 492 residues: 2-succinylbenzoate--CoA ligase (492 aa).

This sequence belongs to the ATP-dependent AMP-binding enzyme family. MenE subfamily.

It carries out the reaction 2-succinylbenzoate + ATP + CoA = 2-succinylbenzoyl-CoA + AMP + diphosphate. Its pathway is quinol/quinone metabolism; 1,4-dihydroxy-2-naphthoate biosynthesis; 1,4-dihydroxy-2-naphthoate from chorismate: step 5/7. It participates in quinol/quinone metabolism; menaquinone biosynthesis. Converts 2-succinylbenzoate (OSB) to 2-succinylbenzoyl-CoA (OSB-CoA). The sequence is that of 2-succinylbenzoate--CoA ligase from Staphylococcus aureus (strain USA300 / TCH1516).